The following is a 683-amino-acid chain: Methionine--tRNA ligase (683 aa).

A 'HIGH' region motif is present at residues 14 to 24; that stretch reads PYANGSIHLGH. Zn(2+) is bound by residues Cys-145, Cys-148, Cys-158, and Cys-161. A 'KMSKS' region motif is present at residues 331-335; it reads KMSKS. Residue Lys-334 participates in ATP binding. In terms of domain architecture, tRNA-binding spans 581-683; the sequence is AFAAVDLRVA…SGAKPGQRIK (103 aa).

Belongs to the class-I aminoacyl-tRNA synthetase family. MetG type 1 subfamily. Homodimer. Requires Zn(2+) as cofactor.

The protein localises to the cytoplasm. It carries out the reaction tRNA(Met) + L-methionine + ATP = L-methionyl-tRNA(Met) + AMP + diphosphate. Its function is as follows. Is required not only for elongation of protein synthesis but also for the initiation of all mRNA translation through initiator tRNA(fMet) aminoacylation. This is Methionine--tRNA ligase from Pseudomonas fluorescens (strain SBW25).